The chain runs to 403 residues: MDKLSIRDLSLEGKKVLVRVDFNVPIKDGKILDDVRIHSAMPTIHYLLKQDAAVILVSHVGRPKGGVFEEAYSLAPIVPVLEGYLGHHVPLSPDCIGEVARQAVAQLSPGRVLLLENVRFHKGEEHSDEDPSFAIELAAYADFYVNDAFGTSHRKHASVYRVPQLFPDRAAAGFLMEKELEFLGQHLLVEPKRPFTAILGGAKMSSKIGVIEALLSCVDHLVLAGGMGYTFLRAMNRQVGNSLVEESGIPLAKKVLEKAQALGVKIHLPVDAKVAKQCDSGEDWRELSIQEGIPEGLAGFDIGAQTIELFSKVIQESATIFWNGPVGVYEVPPFDQGSKAIAQCLASHSSAVTVVGGGDAAAVVALAGCASQISHVSTGGGASLEFLEKGSLPGTEILSPAQS.

Substrate is bound by residues 21–23 (DFN), Arg-36, 59–62 (HVGR), Arg-119, and Arg-154. ATP contacts are provided by residues Lys-207, Gly-299, Glu-330, and 357–360 (GGDA).

This sequence belongs to the phosphoglycerate kinase family. Monomer.

Its subcellular location is the cytoplasm. The catalysed reaction is (2R)-3-phosphoglycerate + ATP = (2R)-3-phospho-glyceroyl phosphate + ADP. The protein operates within carbohydrate degradation; glycolysis; pyruvate from D-glyceraldehyde 3-phosphate: step 2/5. The polypeptide is Phosphoglycerate kinase (pgk) (Chlamydia trachomatis serovar D (strain ATCC VR-885 / DSM 19411 / UW-3/Cx)).